The sequence spans 445 residues: Exodeoxyribonuclease 7 large subunit (445 aa).

Belongs to the XseA family. As to quaternary structure, heterooligomer composed of large and small subunits.

The protein localises to the cytoplasm. The catalysed reaction is Exonucleolytic cleavage in either 5'- to 3'- or 3'- to 5'-direction to yield nucleoside 5'-phosphates.. Functionally, bidirectionally degrades single-stranded DNA into large acid-insoluble oligonucleotides, which are then degraded further into small acid-soluble oligonucleotides. In Staphylococcus aureus (strain JH1), this protein is Exodeoxyribonuclease 7 large subunit.